Here is a 343-residue protein sequence, read N- to C-terminus: Multidrug resistance protein MdtN (343 aa).

Topologically, residues 1–12 are cytoplasmic; the sequence is MESTPKKAPRSK. A helical; Signal-anchor for type II membrane protein transmembrane segment spans residues 13-33; the sequence is FPALLVVALALVALVFVIWRV. The Periplasmic portion of the chain corresponds to 34-343; that stretch reads DSAPSTNDAY…ASAVANLEPQ (310 aa).

It belongs to the membrane fusion protein (MFP) (TC 8.A.1) family. In terms of assembly, could be part of a tripartite efflux system composed of MdtN, MdtO and MdtP.

It localises to the cell inner membrane. In terms of biological role, could be involved in resistance to puromycin, acriflavine and tetraphenylarsonium chloride. This is Multidrug resistance protein MdtN (mdtN) from Escherichia coli O157:H7.